The primary structure comprises 369 residues: MIALLILSLTCSVSTYRLQGFTNAGIVAYKNIQDDNIVFSPFGYSFSMFMSLLPASGNTRIELLKTMDLRKRDLGPAFTELISGLAKLKTSKYTYTDLTYQSFVDNTVCIKPLYYQQYHRFGLYRLNFRRDAVNKINSIVERRSGMSNVVDSNMLDNNTLWAIINTIYFKGTWQYPFDITKTRNASFTNKYGTKTVPMMNVVTKLQGNTITIDDEEYDMVRLPYKDANISMYLAIGDNMTHFTDSITAAKLDYWSFQLGNKVYNLKLPKFSIENKRDIKSIAEMMAPSMFNPDNASFKHMTRDPLYIYKMFQNAKIDVDEQGTVAEASTIMVATARSSPEKLEFNTPFVFIIRHDITGFILFMGKVESP.

The signal sequence occupies residues 1–15 (MIALLILSLTCSVST).

This sequence belongs to the serpin family. Orthopoxvirus OPG040 subfamily. As to quaternary structure, interacts with A56 protein.

The protein localises to the virion membrane. It is found in the host cell membrane. In terms of biological role, prevents cell to cell fusion via its interaction with A56 protein. The A56-K2 complex associates with components of the entry fusion complex (EFC) presumably to avoid superinfection and syncytium formation. The polypeptide is Superinfection exclusion protein (OPG040) (Vaccinia virus (strain Copenhagen) (VACV)).